The chain runs to 269 residues: 4-hydroxy-tetrahydrodipicolinate reductase (269 aa).

NAD(+) contacts are provided by residues 10 to 15 (GANGRM), E36, 99 to 101 (GTT), and 123 to 126 (AANF). The active-site Proton donor/acceptor is the H156. H157 serves as a coordination point for (S)-2,3,4,5-tetrahydrodipicolinate. The Proton donor role is filled by K160. Residue 166–167 (GT) coordinates (S)-2,3,4,5-tetrahydrodipicolinate.

It belongs to the DapB family.

The protein resides in the cytoplasm. It carries out the reaction (S)-2,3,4,5-tetrahydrodipicolinate + NAD(+) + H2O = (2S,4S)-4-hydroxy-2,3,4,5-tetrahydrodipicolinate + NADH + H(+). The enzyme catalyses (S)-2,3,4,5-tetrahydrodipicolinate + NADP(+) + H2O = (2S,4S)-4-hydroxy-2,3,4,5-tetrahydrodipicolinate + NADPH + H(+). Its pathway is amino-acid biosynthesis; L-lysine biosynthesis via DAP pathway; (S)-tetrahydrodipicolinate from L-aspartate: step 4/4. In terms of biological role, catalyzes the conversion of 4-hydroxy-tetrahydrodipicolinate (HTPA) to tetrahydrodipicolinate. The chain is 4-hydroxy-tetrahydrodipicolinate reductase from Neisseria gonorrhoeae (strain ATCC 700825 / FA 1090).